Here is a 206-residue protein sequence, read N- to C-terminus: Xanthine phosphoribosyltransferase (206 aa).

Xanthine is bound by residues Leu28 and Asn35. 136–140 (ANGQA) contributes to the 5-phospho-alpha-D-ribose 1-diphosphate binding site. Xanthine is bound at residue Lys164.

The protein belongs to the purine/pyrimidine phosphoribosyltransferase family. Xpt subfamily. Homodimer.

Its subcellular location is the cytoplasm. The catalysed reaction is XMP + diphosphate = xanthine + 5-phospho-alpha-D-ribose 1-diphosphate. Its pathway is purine metabolism; XMP biosynthesis via salvage pathway; XMP from xanthine: step 1/1. In terms of biological role, converts the preformed base xanthine, a product of nucleic acid breakdown, to xanthosine 5'-monophosphate (XMP), so it can be reused for RNA or DNA synthesis. This chain is Xanthine phosphoribosyltransferase, found in Oenococcus oeni (strain ATCC BAA-331 / PSU-1).